Consider the following 231-residue polypeptide: Cytochrome c oxidase subunit 2 (231 aa).

The Mitochondrial intermembrane portion of the chain corresponds to 1-14 (MAHPSQLGLQDAAS). Residues 15-45 (PVMEELLHFHDHALMIVFLISTLVFYIILAM) form a helical membrane-spanning segment. Topologically, residues 46–59 (MTTKMTDKYILDAQ) are mitochondrial matrix. The chain crosses the membrane as a helical span at residues 60-87 (EIEIVWTLLPAIVLILVALPSLRILYLI). At 88 to 231 (DEVENPHLTI…WSSSMLEEAX (144 aa)) the chain is on the mitochondrial intermembrane side. Residues His161, Cys196, Glu198, Cys200, His204, and Met207 each coordinate Cu cation. A Mg(2+)-binding site is contributed by Glu198.

The protein belongs to the cytochrome c oxidase subunit 2 family. In terms of assembly, component of the cytochrome c oxidase (complex IV, CIV), a multisubunit enzyme composed of 14 subunits. The complex is composed of a catalytic core of 3 subunits MT-CO1, MT-CO2 and MT-CO3, encoded in the mitochondrial DNA, and 11 supernumerary subunits COX4I, COX5A, COX5B, COX6A, COX6B, COX6C, COX7A, COX7B, COX7C, COX8 and NDUFA4, which are encoded in the nuclear genome. The complex exists as a monomer or a dimer and forms supercomplexes (SCs) in the inner mitochondrial membrane with NADH-ubiquinone oxidoreductase (complex I, CI) and ubiquinol-cytochrome c oxidoreductase (cytochrome b-c1 complex, complex III, CIII), resulting in different assemblies (supercomplex SCI(1)III(2)IV(1) and megacomplex MCI(2)III(2)IV(2)). Found in a complex with TMEM177, COA6, COX18, COX20, SCO1 and SCO2. Interacts with TMEM177 in a COX20-dependent manner. Interacts with COX20. Interacts with COX16. Cu cation is required as a cofactor.

It is found in the mitochondrion inner membrane. It carries out the reaction 4 Fe(II)-[cytochrome c] + O2 + 8 H(+)(in) = 4 Fe(III)-[cytochrome c] + 2 H2O + 4 H(+)(out). Its function is as follows. Component of the cytochrome c oxidase, the last enzyme in the mitochondrial electron transport chain which drives oxidative phosphorylation. The respiratory chain contains 3 multisubunit complexes succinate dehydrogenase (complex II, CII), ubiquinol-cytochrome c oxidoreductase (cytochrome b-c1 complex, complex III, CIII) and cytochrome c oxidase (complex IV, CIV), that cooperate to transfer electrons derived from NADH and succinate to molecular oxygen, creating an electrochemical gradient over the inner membrane that drives transmembrane transport and the ATP synthase. Cytochrome c oxidase is the component of the respiratory chain that catalyzes the reduction of oxygen to water. Electrons originating from reduced cytochrome c in the intermembrane space (IMS) are transferred via the dinuclear copper A center (CU(A)) of subunit 2 and heme A of subunit 1 to the active site in subunit 1, a binuclear center (BNC) formed by heme A3 and copper B (CU(B)). The BNC reduces molecular oxygen to 2 water molecules using 4 electrons from cytochrome c in the IMS and 4 protons from the mitochondrial matrix. The protein is Cytochrome c oxidase subunit 2 (MT-CO2) of Latimeria chalumnae (Coelacanth).